We begin with the raw amino-acid sequence, 212 residues long: MAAPPQLQALLQAVNKLLRQRRYHAALAVIKGFRNGAVYGVKIRAPHALVMTFLFRSGSLREKLQAILKATYIHSRNLACFVFAYKSLHALQSHVQGETHQMHSFLAAFIGGLLLFGENNNINSQINMYLTSRVLYALCRLGVEKGYIPALKWDPFPLHTAVIWGLVLWLFEYHRPTLQPSLQSSMTYLYEDSNVWHDLSDFLIFNKSHPSK.

The next 2 membrane-spanning stretches (helical) occupy residues 97 to 117 (GETH…LLFG) and 153 to 173 (WDPF…LFEY). N206 carries N-linked (GlcNAc...) asparagine glycosylation.

The protein belongs to the peroxisomal membrane protein PXMP2/4 family. As to quaternary structure, interacts with PEX19.

Its subcellular location is the peroxisome membrane. The sequence is that of Peroxisomal membrane protein 4 (Pxmp4) from Mus musculus (Mouse).